The following is a 75-amino-acid chain: Small ribosomal subunit protein bS18 (75 aa).

It belongs to the bacterial ribosomal protein bS18 family. As to quaternary structure, part of the 30S ribosomal subunit. Forms a tight heterodimer with protein bS6.

In terms of biological role, binds as a heterodimer with protein bS6 to the central domain of the 16S rRNA, where it helps stabilize the platform of the 30S subunit. This Thermotoga maritima (strain ATCC 43589 / DSM 3109 / JCM 10099 / NBRC 100826 / MSB8) protein is Small ribosomal subunit protein bS18.